We begin with the raw amino-acid sequence, 46 residues long: Ligatoxin-B (46 aa).

Cystine bridges form between cysteine 3-cysteine 40, cysteine 4-cysteine 32, and cysteine 16-cysteine 26.

This sequence belongs to the plant thionin (TC 1.C.44) family.

The protein resides in the secreted. In terms of biological role, thionins are small plant proteins which are toxic to animal cells. They seem to exert their toxic effect at the level of the cell membrane. Their precise function is not known. This chain is Ligatoxin-B, found in Phoradendron liga (Argentine mistletoe).